The primary structure comprises 321 residues: Lipoyl synthase (321 aa).

[4Fe-4S] cluster-binding residues include cysteine 68, cysteine 73, cysteine 79, cysteine 94, cysteine 98, cysteine 101, and serine 308. The Radical SAM core domain occupies 80-297; it reads FNHGTATFMI…KAAAMDMGFT (218 aa).

Belongs to the radical SAM superfamily. Lipoyl synthase family. Requires [4Fe-4S] cluster as cofactor.

The protein resides in the cytoplasm. The enzyme catalyses [[Fe-S] cluster scaffold protein carrying a second [4Fe-4S](2+) cluster] + N(6)-octanoyl-L-lysyl-[protein] + 2 oxidized [2Fe-2S]-[ferredoxin] + 2 S-adenosyl-L-methionine + 4 H(+) = [[Fe-S] cluster scaffold protein] + N(6)-[(R)-dihydrolipoyl]-L-lysyl-[protein] + 4 Fe(3+) + 2 hydrogen sulfide + 2 5'-deoxyadenosine + 2 L-methionine + 2 reduced [2Fe-2S]-[ferredoxin]. Its pathway is protein modification; protein lipoylation via endogenous pathway; protein N(6)-(lipoyl)lysine from octanoyl-[acyl-carrier-protein]: step 2/2. Functionally, catalyzes the radical-mediated insertion of two sulfur atoms into the C-6 and C-8 positions of the octanoyl moiety bound to the lipoyl domains of lipoate-dependent enzymes, thereby converting the octanoylated domains into lipoylated derivatives. The polypeptide is Lipoyl synthase (Erwinia tasmaniensis (strain DSM 17950 / CFBP 7177 / CIP 109463 / NCPPB 4357 / Et1/99)).